A 279-amino-acid polypeptide reads, in one-letter code: Tryptophan prenyltransferase ComQ (279 aa).

Mg(2+) is bound by residues Asp67 and Asp71.

It belongs to the FPP/GGPP synthase family. Mg(2+) is required as a cofactor.

The protein resides in the cell membrane. It catalyses the reaction L-tryptophyl-[protein] + (2E)-geranyl diphosphate = (2S,3R)-3-geranyl-2,3-dihydro-2,N(alpha)-cyclo-L-tryptophyl-[protein] + diphosphate. Part of a major quorum-sensing system that regulates the development of genetic competence. Involved in the maturation of the competence pheromone ComX. Acts by catalyzing the transfer of a geranyl group on the ComX pheromone. Cannot use farnesyl diphosphate (FPP). The polypeptide is Tryptophan prenyltransferase ComQ (Bacillus spizizenii (Bacillus subtilis subsp. spizizenii)).